A 181-amino-acid polypeptide reads, in one-letter code: MKFLFDLFPVILFFITFKIYGIYAATAVAIGATFAQIGWVWFRHGKVDTMLWVSLVLIVVFGSATLILQDETFIKWKPSVLYWLFAAALLIAQAIFKKNFIRTMMKEQLTLPEPVWARVNASWAAFFAFMGAANLYVAFNYSTETWVNFKLFGFMGLMLVFVVLQGLMLSKYMATDEDKEA.

5 consecutive transmembrane segments (helical) span residues 3 to 23 (FLFD…YGIY), 49 to 69 (TMLW…LILQ), 76 to 96 (WKPS…QAIF), 119 to 139 (VNAS…YVAF), and 149 to 169 (FKLF…GLML).

The protein belongs to the YciB family.

It localises to the cell inner membrane. Functionally, plays a role in cell envelope biogenesis, maintenance of cell envelope integrity and membrane homeostasis. This Nitrosospira multiformis (strain ATCC 25196 / NCIMB 11849 / C 71) protein is Inner membrane-spanning protein YciB.